The sequence spans 101 residues: Small ribosomal subunit protein uS10 (101 aa).

Belongs to the universal ribosomal protein uS10 family. Part of the 30S ribosomal subunit.

In terms of biological role, involved in the binding of tRNA to the ribosomes. This is Small ribosomal subunit protein uS10 from Cytophaga hutchinsonii (strain ATCC 33406 / DSM 1761 / CIP 103989 / NBRC 15051 / NCIMB 9469 / D465).